Reading from the N-terminus, the 364-residue chain is Nucleoside ABC transporter permease protein NupB (364 aa).

8 helical membrane passes run 9-29 (LVPLIAIVFGFLLGAIIMLAF), 77-99 (FNIGMSGQALAGWISSMWFALSF), 105-125 (LLMIPLVVIIGMVFGAFMGFI), 138-158 (VITTIMLNYIMLFFSTFMIHS), 195-215 (TLNIGLIIAIIALVIMAIIFT), 244-264 (LILSMVVAGALAGLGGVVYGF), 284-304 (MAVALLGGNSPIGILFAALLF), and 326-346 (VVTAAIIFFIAVKFIIEVMLP).

Belongs to the binding-protein-dependent transport system permease family. As to quaternary structure, the complex is composed of two ATP-binding proteins (NupA), two transmembrane proteins (NupB and NupC) and a solute-binding protein (BmpA).

It localises to the cell membrane. Functionally, part of an ABC transporter complex involved in the uptake of all common nucleosides. Responsible for the translocation of the substrate across the membrane. The chain is Nucleoside ABC transporter permease protein NupB from Lactococcus lactis subsp. cremoris (strain MG1363).